The primary structure comprises 455 residues: SVGFKAGVKDYKLTYYTPDYETKDTDILAAFRVTPQPGVPPEEAGAAVAAESSTGTWTTVWTDGLTSLDRYKGRCYHIEPVAGEESQFIAYVAYPLDLFEEGSVTNMFTSIVGNVFGFKALRALRLEDLRIPNAYVKTFQGPPHGIQVERDKLNKYGRPLLGCTIKPKLGLSAKNYGRAVYECLRGGLDFTKDDENVNSQPFMRWRDRFLFCAEALYKAQAETGEIKGHYLNATAGTCEEMIKRAVFARELGVPIVMHDYLTGGFTANTSLAHYCRDNGLLLHIHRAMHAVIDRQKNHGMHFRVLAKALRLSGGDHIHSGTVVGKLEGEREITLGFVDLLRDDFVEKDRSRGIYFTQDWVSLPGVLPVASGGIHVWHMPALTEIFGDDSVLQFGGGTLGHPWGNAPGAVANRVALEACVQARNEGRDLASEGNQIIREASKWSPELAAACEVWKE.

Lysine 5 is subject to N6,N6,N6-trimethyllysine. The substrate site is built by asparagine 114 and threonine 164. The active-site Proton acceptor is the lysine 166. Lysine 168 serves as a coordination point for substrate. Lysine 192, aspartate 194, and glutamate 195 together coordinate Mg(2+). Lysine 192 bears the N6-carboxylysine mark. The active-site Proton acceptor is histidine 285. Substrate-binding residues include arginine 286, histidine 318, and serine 370.

It belongs to the RuBisCO large chain family. Type I subfamily. Heterohexadecamer of 8 large chains and 8 small chains; disulfide-linked. The disulfide link is formed within the large subunit homodimers. Mg(2+) serves as cofactor. Post-translationally, the disulfide bond which can form in the large chain dimeric partners within the hexadecamer appears to be associated with oxidative stress and protein turnover.

It localises to the plastid. Its subcellular location is the chloroplast. The enzyme catalyses 2 (2R)-3-phosphoglycerate + 2 H(+) = D-ribulose 1,5-bisphosphate + CO2 + H2O. It carries out the reaction D-ribulose 1,5-bisphosphate + O2 = 2-phosphoglycolate + (2R)-3-phosphoglycerate + 2 H(+). Its function is as follows. RuBisCO catalyzes two reactions: the carboxylation of D-ribulose 1,5-bisphosphate, the primary event in carbon dioxide fixation, as well as the oxidative fragmentation of the pentose substrate in the photorespiration process. Both reactions occur simultaneously and in competition at the same active site. In Lupinus digitatus (Lupine), this protein is Ribulose bisphosphate carboxylase large chain.